Here is a 75-residue protein sequence, read N- to C-terminus: Small ribosomal subunit protein bS18 (75 aa).

It belongs to the bacterial ribosomal protein bS18 family. Part of the 30S ribosomal subunit. Forms a tight heterodimer with protein bS6.

Its function is as follows. Binds as a heterodimer with protein bS6 to the central domain of the 16S rRNA, where it helps stabilize the platform of the 30S subunit. The protein is Small ribosomal subunit protein bS18 of Buchnera aphidicola subsp. Cinara cedri (strain Cc).